Here is a 504-residue protein sequence, read N- to C-terminus: Xylose import ATP-binding protein XylG (504 aa).

ABC transporter domains lie at 6-243 and 260-504; these read LEMK…VGRE and LKVD…TGGK. 38-45 contacts ATP; it reads GENGAGKS.

It belongs to the ABC transporter superfamily. Xylose importer (TC 3.A.1.2.4) family. As to quaternary structure, the complex is composed of two ATP-binding proteins (XylG), two transmembrane proteins (XylH) and a solute-binding protein (XylF).

It is found in the cell membrane. It carries out the reaction D-xylose(out) + ATP + H2O = D-xylose(in) + ADP + phosphate + H(+). Functionally, part of the ABC transporter complex XylFGH involved in xylose import. Responsible for energy coupling to the transport system. This is Xylose import ATP-binding protein XylG from Geobacillus kaustophilus (strain HTA426).